A 74-amino-acid polypeptide reads, in one-letter code: ATP synthase subunit c (74 aa).

A run of 2 helical transmembrane segments spans residues F8 to I28 and I52 to I72.

Belongs to the ATPase C chain family. F-type ATPases have 2 components, F(1) - the catalytic core - and F(0) - the membrane proton channel. F(1) has five subunits: alpha(3), beta(3), gamma(1), delta(1), epsilon(1). F(0) has three main subunits: a(1), b(2) and c(10-14). The alpha and beta chains form an alternating ring which encloses part of the gamma chain. F(1) is attached to F(0) by a central stalk formed by the gamma and epsilon chains, while a peripheral stalk is formed by the delta and b chains.

The protein resides in the cell inner membrane. Its function is as follows. F(1)F(0) ATP synthase produces ATP from ADP in the presence of a proton or sodium gradient. F-type ATPases consist of two structural domains, F(1) containing the extramembraneous catalytic core and F(0) containing the membrane proton channel, linked together by a central stalk and a peripheral stalk. During catalysis, ATP synthesis in the catalytic domain of F(1) is coupled via a rotary mechanism of the central stalk subunits to proton translocation. Functionally, key component of the F(0) channel; it plays a direct role in translocation across the membrane. A homomeric c-ring of between 10-14 subunits forms the central stalk rotor element with the F(1) delta and epsilon subunits. The protein is ATP synthase subunit c of Rickettsia conorii (strain ATCC VR-613 / Malish 7).